The following is a 383-amino-acid chain: MNELEFVTKHRRHLHQHPELSLHEFETTAYIKAFLDSLNIKYDCPLETGVIAYLEGNGSHTIAYRADIDALPILEENDVPYRSQSDHVMHACGHDGHTTALMLFVQRCKDMQDAGQLPQNVVFIFQPAEETGGGANRLIKAGAFDKYPIEAVFGIHVNPFADEGIAVIRDEEITASATEYRFFLTGLSSHVADKEQAHSCGEALQHVLTQISQIQQFHLNGLKRNIVHIGHFKAGEAINTVPSNGYLEGTIRTYDIDDLTIVKNQMHKIAESVKLLFNVECEVKFAEGYPPTINSPKLRTQIEDALIKADLNVYDKPTPFLFGEDFSFYGQQLAPAYFVFIGTRNEDKGFVTGLHTSHLNFDEKALINVVNFYENLLNNYKEV.

This sequence belongs to the peptidase M20 family.

This is an uncharacterized protein from Staphylococcus aureus (strain N315).